The primary structure comprises 853 residues: Probable inorganic carbon transporter subunit DabA (853 aa).

The interval 1–21 (MSHANSEETMMNTAVAHPSTS) is disordered. Polar residues predominate over residues 7 to 21 (EETMMNTAVAHPSTS). Residues Cys-364, Asp-366, His-546, and Cys-561 each contribute to the Zn(2+) site.

Belongs to the inorganic carbon transporter (TC 9.A.2) DabA family. In terms of assembly, forms a complex with DabB. Zn(2+) serves as cofactor.

The protein resides in the cell inner membrane. In terms of biological role, part of an energy-coupled inorganic carbon pump. In Methylovorus glucosotrophus (strain SIP3-4), this protein is Probable inorganic carbon transporter subunit DabA.